The chain runs to 218 residues: ATP-dependent dethiobiotin synthetase BioD (218 aa).

Residue 10-15 (NAGKTT) participates in ATP binding. Residue Thr14 coordinates Mg(2+). Lys35 is a catalytic residue. Thr39 is a substrate binding site. Glu116 lines the Mg(2+) pocket. Residues 116–119 (EGAG) and 176–177 (LR) contribute to the ATP site.

This sequence belongs to the dethiobiotin synthetase family. Homodimer. Requires Mg(2+) as cofactor.

Its subcellular location is the cytoplasm. The enzyme catalyses (7R,8S)-7,8-diammoniononanoate + CO2 + ATP = (4R,5S)-dethiobiotin + ADP + phosphate + 3 H(+). The protein operates within cofactor biosynthesis; biotin biosynthesis; biotin from 7,8-diaminononanoate: step 1/2. Its function is as follows. Catalyzes a mechanistically unusual reaction, the ATP-dependent insertion of CO2 between the N7 and N8 nitrogen atoms of 7,8-diaminopelargonic acid (DAPA, also called 7,8-diammoniononanoate) to form a ureido ring. In Helicobacter pylori (strain J99 / ATCC 700824) (Campylobacter pylori J99), this protein is ATP-dependent dethiobiotin synthetase BioD.